The sequence spans 736 residues: Transcription regulator protein BACH1 (736 aa).

Residues 34–100 enclose the BTB domain; it reads CDVTIFVEGQ…AYTAKLILSK (67 aa). A Phosphoserine modification is found at serine 196. Over residues 286-295 the composition is skewed to basic and acidic residues; sequence MEPEETKKDP. Disordered regions lie at residues 286-312 and 349-389; these read MEPE…FPHN and KPLS…RSSV. Phosphoserine is present on residues serine 364 and serine 445. The bZIP domain occupies 557–620; that stretch reads CIHDIRRRSK…GETKQNLTGL (64 aa). The segment at 562–578 is basic motif; that stretch reads RRRSKNRIAAQRCRKRK. Residues 582-589 form a leucine-zipper region; it reads IQNLESEI. Positions 680–719 are disordered; sequence LPPCARGNSEPGYARGQESQQMSTATSEQAGPAEQCRQSG. The span at 696–708 shows a compositional bias: polar residues; it reads QESQQMSTATSEQ.

It belongs to the bZIP family. CNC subfamily. In terms of assembly, heterodimer of BACH1 and MAFK. In terms of processing, ubiquitinated by the SCF(FBXL17) complex or by the by the SCF(FBXO22) complex, leading to its degradation by the proteasome. Under oxidative stress, reactive oxygen species covalently modify cysteine residues on the bZIP domain of BACH1 and release it from chromatin. If the BTB domain of BACH1 remains intact, its beta1-alpha6 degron is recognized by FBXO22, promoting its ubiquitination and degradation. If the structural integrity of the beta1-alpha6 degron is compromised, FBXL17 will transiently associate with the BACH1 BTB dimer and remodel it into stably bound monomer for ubiquitination and degradation.

It is found in the nucleus. In terms of biological role, transcriptional regulator that acts as a repressor or activator, depending on the context. Binds to NF-E2 DNA binding sites. Plays important roles in coordinating transcription activation and repression by MAFK. Together with MAF, represses the transcription of genes under the control of the NFE2L2 oxidative stress pathway. The chain is Transcription regulator protein BACH1 from Homo sapiens (Human).